Here is a 185-residue protein sequence, read N- to C-terminus: Acireductone dioxygenase (185 aa).

Residues 1–22 form a disordered region; the sequence is MSRLSIHPEGSTNATSPAEPLL. The Fe(2+) site is built by His102, His104, Glu108, and His146. Ni(2+)-binding residues include His102, His104, Glu108, and His146.

The protein belongs to the acireductone dioxygenase (ARD) family. As to quaternary structure, monomer. It depends on Fe(2+) as a cofactor. Ni(2+) is required as a cofactor.

It carries out the reaction 1,2-dihydroxy-5-(methylsulfanyl)pent-1-en-3-one + O2 = 3-(methylsulfanyl)propanoate + CO + formate + 2 H(+). The catalysed reaction is 1,2-dihydroxy-5-(methylsulfanyl)pent-1-en-3-one + O2 = 4-methylsulfanyl-2-oxobutanoate + formate + 2 H(+). It functions in the pathway amino-acid biosynthesis; L-methionine biosynthesis via salvage pathway; L-methionine from S-methyl-5-thio-alpha-D-ribose 1-phosphate: step 5/6. Functionally, catalyzes 2 different reactions between oxygen and the acireductone 1,2-dihydroxy-3-keto-5-methylthiopentene (DHK-MTPene) depending upon the metal bound in the active site. Fe-containing acireductone dioxygenase (Fe-ARD) produces formate and 2-keto-4-methylthiobutyrate (KMTB), the alpha-ketoacid precursor of methionine in the methionine recycle pathway. Ni-containing acireductone dioxygenase (Ni-ARD) produces methylthiopropionate, carbon monoxide and formate, and does not lie on the methionine recycle pathway. The chain is Acireductone dioxygenase from Prochlorococcus marinus (strain MIT 9313).